The primary structure comprises 54 residues: Soricidin (54 aa).

3 cysteine pairs are disulfide-bonded: C2-C23, C6-C27, and C9-C41.

Belongs to the opioid neuropeptide precursor family. In terms of assembly, member of a multiprotein complex. In terms of tissue distribution, salivary gland.

Its subcellular location is the secreted. In terms of biological role, paralytic toxin that immobilizes a mealworm for 7 days. Inhibits the transient receptor potential cation channel subfamily V member 6 (TRPV6). In Blarina brevicauda (Northern short-tailed shrew), this protein is Soricidin.